A 437-amino-acid chain; its full sequence is RNA-binding motif, single-stranded-interacting protein 3 (437 aa).

The segment at 28 to 57 (YAPAPHPMAPPSPSTNSSSNNSSNNSSGEQ) is disordered. Pro residues predominate over residues 31 to 40 (APHPMAPPSP). A compositionally biased stretch (low complexity) spans 41 to 54 (STNSSSNNSSNNSS). RRM domains are found at residues 61–134 (TNLY…MAKQ) and 140–225 (TNLY…FADG). Positions 399–422 (TSPQTVAPSSQDTSGQQQQIAVDT) are enriched in polar residues. The segment at 399–437 (TSPQTVAPSSQDTSGQQQQIAVDTSNEHAPAYSYQQSKP) is disordered.

In terms of tissue distribution, expressed in fetal brain, fetal lung, fetal liver, heart, brain, placenta, lung, liver, muscle, kidney and pancreas.

The protein localises to the cytoplasm. Functionally, binds poly(A) and poly(U) oligoribonucleotides. This Homo sapiens (Human) protein is RNA-binding motif, single-stranded-interacting protein 3 (RBMS3).